A 409-amino-acid polypeptide reads, in one-letter code: Threonine dehydratase-like protein AKTS1-1 (409 aa).

The segment at 1–21 (MADYLRQVMPENDSDSEALPR) is disordered. Lys-111 carries the post-translational modification N6-(pyridoxal phosphate)lysine. Pyridoxal 5'-phosphate-binding positions include Asn-138, 239-243 (GEGSL), and Ser-368.

It belongs to the serine/threonine dehydratase family. Requires pyridoxal 5'-phosphate as cofactor.

Its pathway is mycotoxin biosynthesis. Threonine dehydratase-like protein; part of the gene clusters that mediate the biosynthesis of the host-selective toxins (HSTs) AK-toxins responsible for Japanese pear black spot disease by the Japanese pear pathotype. AK-toxins are esters of 9,10-epoxy 8-hydroxy 9-methyldecatrienoic acid (EDA). On cellular level, AK-toxins affect plasma membrane of susceptible cells and cause a sudden increase in loss of K(+) after a few minutes of toxin treatment. The acyl-CoA ligase AKT1, the hydrolase AKT2 and enoyl-CoA hydratase AKT3 are all involved in the biosynthesis of the AK-, AF- and ACT-toxin common 9,10-epoxy-8-hydroxy-9-methyl-decatrienoic acid (EDA) structural moiety. Part of the EDA biosynthesis occurs in the peroxisome since these 3 enzymes are localized in peroxisomes. The exact roles of the 3 enzymes, as well as of additional AK-toxin clusters enzymes, including AKT4, AKT6 and AKTS1, have still to be elucidated. The Cytochrome P450 monooxygenase AKT7 on the other side functions to limit production of EDA and AK-toxin, probably via the catalysis of a side reaction of EDA or its precursor. The sequence is that of Threonine dehydratase-like protein AKTS1-1 from Alternaria alternata (Alternaria rot fungus).